Consider the following 244-residue polypeptide: 1-(5-phosphoribosyl)-5-[(5-phosphoribosylamino)methylideneamino] imidazole-4-carboxamide isomerase (244 aa).

The active-site Proton acceptor is the aspartate 8. The active-site Proton donor is aspartate 131.

It belongs to the HisA/HisF family.

Its subcellular location is the cytoplasm. The catalysed reaction is 1-(5-phospho-beta-D-ribosyl)-5-[(5-phospho-beta-D-ribosylamino)methylideneamino]imidazole-4-carboxamide = 5-[(5-phospho-1-deoxy-D-ribulos-1-ylimino)methylamino]-1-(5-phospho-beta-D-ribosyl)imidazole-4-carboxamide. It functions in the pathway amino-acid biosynthesis; L-histidine biosynthesis; L-histidine from 5-phospho-alpha-D-ribose 1-diphosphate: step 4/9. The polypeptide is 1-(5-phosphoribosyl)-5-[(5-phosphoribosylamino)methylideneamino] imidazole-4-carboxamide isomerase (Thermomicrobium roseum (strain ATCC 27502 / DSM 5159 / P-2)).